A 235-amino-acid polypeptide reads, in one-letter code: Orotidine 5'-phosphate decarboxylase (235 aa).

Residues Asp12, Lys34, 61–70, Thr116, Arg177, Gln186, Gly206, and Arg207 each bind substrate; that span reads DMKLLDIDNT. Lys63 acts as the Proton donor in catalysis.

This sequence belongs to the OMP decarboxylase family. Type 1 subfamily. In terms of assembly, homodimer.

It catalyses the reaction orotidine 5'-phosphate + H(+) = UMP + CO2. The protein operates within pyrimidine metabolism; UMP biosynthesis via de novo pathway; UMP from orotate: step 2/2. Its function is as follows. Catalyzes the decarboxylation of orotidine 5'-monophosphate (OMP) to uridine 5'-monophosphate (UMP). The polypeptide is Orotidine 5'-phosphate decarboxylase (Rhizobium johnstonii (strain DSM 114642 / LMG 32736 / 3841) (Rhizobium leguminosarum bv. viciae)).